A 334-amino-acid chain; its full sequence is Fructose-1,6-bisphosphatase class 1 (334 aa).

The Mg(2+) site is built by Glu91, Asp113, Leu115, and Asp116. Substrate contacts are provided by residues 116-119 (DGSS), Asn208, and Lys274. Residue Glu280 coordinates Mg(2+).

It belongs to the FBPase class 1 family. As to quaternary structure, homotetramer. It depends on Mg(2+) as a cofactor.

It localises to the cytoplasm. The enzyme catalyses beta-D-fructose 1,6-bisphosphate + H2O = beta-D-fructose 6-phosphate + phosphate. The protein operates within carbohydrate biosynthesis; gluconeogenesis. This Herminiimonas arsenicoxydans protein is Fructose-1,6-bisphosphatase class 1.